The chain runs to 380 residues: Cytochrome b (380 aa).

4 consecutive transmembrane segments (helical) span residues 34-54 (FGSL…LLAM), 78-99 (WLIR…YLHI), 114-134 (WNVG…GYVL), and 179-199 (FFAL…VHLT). Heme b-binding residues include His84 and His98. Heme b-binding residues include His183 and His197. His202 is a binding site for a ubiquinone. 4 helical membrane passes run 227-247 (IKDI…ALFS), 289-309 (LGGV…PLLH), 321-341 (LSQI…WIGS), and 348-368 (FIII…VLFP).

Belongs to the cytochrome b family. As to quaternary structure, the cytochrome bc1 complex contains 11 subunits: 3 respiratory subunits (MT-CYB, CYC1 and UQCRFS1), 2 core proteins (UQCRC1 and UQCRC2) and 6 low-molecular weight proteins (UQCRH/QCR6, UQCRB/QCR7, UQCRQ/QCR8, UQCR10/QCR9, UQCR11/QCR10 and a cleavage product of UQCRFS1). This cytochrome bc1 complex then forms a dimer. The cofactor is heme b.

Its subcellular location is the mitochondrion inner membrane. Functionally, component of the ubiquinol-cytochrome c reductase complex (complex III or cytochrome b-c1 complex) that is part of the mitochondrial respiratory chain. The b-c1 complex mediates electron transfer from ubiquinol to cytochrome c. Contributes to the generation of a proton gradient across the mitochondrial membrane that is then used for ATP synthesis. This chain is Cytochrome b (MT-CYB), found in Vireo olivaceus (Red-eyed vireo).